Consider the following 513-residue polypeptide: Ferulic acid decarboxylase 1 (513 aa).

Mn(2+) is bound by residues Asn-174, His-197, and Glu-240. Prenylated FMN is bound by residues 174-179 (NWSIAR), 196-197 (QH), and Glu-240. The active-site Proton donor is the Glu-289. Residue Lys-405 coordinates prenylated FMN.

It belongs to the UbiD family. UbiD-like/FDC subfamily. As to quaternary structure, homodimer. May form higher order oligomers. Mn(2+) is required as a cofactor. The cofactor is prenylated FMN.

It is found in the cytoplasm. It catalyses the reaction (E)-4-coumarate + H(+) = 4-vinylphenol + CO2. The enzyme catalyses (E)-cinnamate + H(+) = styrene + CO2. The catalysed reaction is (E)-ferulate + H(+) = 2-methoxy-4-vinylphenol + CO2. Catalyzes the reversible decarboxylation of aromatic carboxylic acids like ferulic acid, p-coumaric acid or cinnamic acid, producing the corresponding vinyl derivatives 4-vinylphenol, 4-vinylguaiacol, and styrene, respectively, which play the role of aroma metabolites. The sequence is that of Ferulic acid decarboxylase 1 from Candida dubliniensis (strain CD36 / ATCC MYA-646 / CBS 7987 / NCPF 3949 / NRRL Y-17841) (Yeast).